A 144-amino-acid polypeptide reads, in one-letter code: MLMPKRVKYRREHRGKMRGRAKGGTEVAFGEFGLQAQAASWITNRQIEAARRAMTRYMKRGGKVWIKIFPSKPYTAKPLEVRMGSGKGAPEGWVAVVKPGKIMFEIAGVSEEVAREALRLAAHKLPVKCKFVKREENGGESNEN.

This sequence belongs to the universal ribosomal protein uL16 family. As to quaternary structure, part of the 50S ribosomal subunit.

Functionally, binds 23S rRNA and is also seen to make contacts with the A and possibly P site tRNAs. In Bacillus cereus (strain ATCC 10987 / NRS 248), this protein is Large ribosomal subunit protein uL16.